Reading from the N-terminus, the 393-residue chain is Formate-dependent phosphoribosylglycinamide formyltransferase (393 aa).

Residues 22 to 23 (EL) and glutamate 82 contribute to the N(1)-(5-phospho-beta-D-ribosyl)glycinamide site. ATP contacts are provided by residues arginine 114, lysine 155, 160-165 (SSGHGQ), 195-198 (EGFV), and glutamate 203. The ATP-grasp domain maps to 119-308 (RLAAEELGLP…EFALHARAIL (190 aa)). Residues glutamate 267 and glutamate 279 each coordinate Mg(2+). Residues aspartate 286, lysine 356, and 363–364 (RR) each bind N(1)-(5-phospho-beta-D-ribosyl)glycinamide.

This sequence belongs to the PurK/PurT family. In terms of assembly, homodimer.

The catalysed reaction is N(1)-(5-phospho-beta-D-ribosyl)glycinamide + formate + ATP = N(2)-formyl-N(1)-(5-phospho-beta-D-ribosyl)glycinamide + ADP + phosphate + H(+). Its pathway is purine metabolism; IMP biosynthesis via de novo pathway; N(2)-formyl-N(1)-(5-phospho-D-ribosyl)glycinamide from N(1)-(5-phospho-D-ribosyl)glycinamide (formate route): step 1/1. Functionally, involved in the de novo purine biosynthesis. Catalyzes the transfer of formate to 5-phospho-ribosyl-glycinamide (GAR), producing 5-phospho-ribosyl-N-formylglycinamide (FGAR). Formate is provided by PurU via hydrolysis of 10-formyl-tetrahydrofolate. In Mannheimia succiniciproducens (strain KCTC 0769BP / MBEL55E), this protein is Formate-dependent phosphoribosylglycinamide formyltransferase.